A 98-amino-acid chain; its full sequence is Small ribosomal subunit protein bS6c (98 aa).

It belongs to the bacterial ribosomal protein bS6 family.

The protein resides in the plastid. The protein localises to the chloroplast. Binds together with bS18 to 16S ribosomal RNA. This Phaeodactylum tricornutum (strain CCAP 1055/1) protein is Small ribosomal subunit protein bS6c.